Here is a 355-residue protein sequence, read N- to C-terminus: Phospho-N-acetylmuramoyl-pentapeptide-transferase (355 aa).

Helical transmembrane passes span 14–34 (PTGT…VVFF), 40–60 (LLIP…QVVP), 84–104 (GTPT…ALIW), 107–127 (FTPN…IGWL), 147–167 (LILQ…NQVS), 176–196 (LVIP…VAES), 205–225 (VDGL…IIIA), 227–247 (SHPD…GFIF), 268–290 (ALAA…GLFF), and 334–354 (TKIV…AIWS).

Belongs to the glycosyltransferase 4 family. MraY subfamily. Requires Mg(2+) as cofactor.

It is found in the cell inner membrane. It carries out the reaction UDP-N-acetyl-alpha-D-muramoyl-L-alanyl-gamma-D-glutamyl-meso-2,6-diaminopimeloyl-D-alanyl-D-alanine + di-trans,octa-cis-undecaprenyl phosphate = di-trans,octa-cis-undecaprenyl diphospho-N-acetyl-alpha-D-muramoyl-L-alanyl-D-glutamyl-meso-2,6-diaminopimeloyl-D-alanyl-D-alanine + UMP. Its pathway is cell wall biogenesis; peptidoglycan biosynthesis. Functionally, catalyzes the initial step of the lipid cycle reactions in the biosynthesis of the cell wall peptidoglycan: transfers peptidoglycan precursor phospho-MurNAc-pentapeptide from UDP-MurNAc-pentapeptide onto the lipid carrier undecaprenyl phosphate, yielding undecaprenyl-pyrophosphoryl-MurNAc-pentapeptide, known as lipid I. The polypeptide is Phospho-N-acetylmuramoyl-pentapeptide-transferase (Microcystis aeruginosa (strain NIES-843 / IAM M-2473)).